A 438-amino-acid chain; its full sequence is sn-glycerol-3-phosphate-binding periplasmic protein UgpB (438 aa).

Residues 1 to 23 form the signal peptide; that stretch reads MKPLHYTASALALGLALMGNAQA. 7 residues coordinate sn-glycerol 3-phosphate: Tyr-65, Glu-89, Ser-144, Ser-270, Gly-307, Tyr-346, and Arg-397.

The protein belongs to the bacterial solute-binding protein 1 family. In terms of assembly, the complex is composed of two ATP-binding proteins (UgpC), two transmembrane proteins (UgpA and UgpE) and a solute-binding protein (UgpB).

The protein resides in the periplasm. Its function is as follows. Part of the ABC transporter complex UgpBAEC involved in sn-glycerol-3-phosphate (G3P) import. Binds G3P. In Escherichia coli O157:H7, this protein is sn-glycerol-3-phosphate-binding periplasmic protein UgpB (ugpB).